We begin with the raw amino-acid sequence, 101 residues long: Urease subunit beta (101 aa).

Belongs to the urease beta subunit family. Heterotrimer of UreA (gamma), UreB (beta) and UreC (alpha) subunits. Three heterotrimers associate to form the active enzyme.

It localises to the cytoplasm. The enzyme catalyses urea + 2 H2O + H(+) = hydrogencarbonate + 2 NH4(+). The protein operates within nitrogen metabolism; urea degradation; CO(2) and NH(3) from urea (urease route): step 1/1. The chain is Urease subunit beta from Rhodopseudomonas palustris (strain HaA2).